Here is a 218-residue protein sequence, read N- to C-terminus: Pyridoxine/pyridoxamine 5'-phosphate oxidase (218 aa).

Residues R14–Y17 and K72 each bind substrate. Residues R67–K72, Y82–T83, R88, K89, and Q111 each bind FMN. Y129, R133, and S137 together coordinate substrate. Residues Q146–S147 and W191 each bind FMN. R197–H199 contacts substrate. Position 201 (R201) interacts with FMN.

This sequence belongs to the pyridoxamine 5'-phosphate oxidase family. As to quaternary structure, homodimer. It depends on FMN as a cofactor.

The catalysed reaction is pyridoxamine 5'-phosphate + O2 + H2O = pyridoxal 5'-phosphate + H2O2 + NH4(+). It catalyses the reaction pyridoxine 5'-phosphate + O2 = pyridoxal 5'-phosphate + H2O2. Its pathway is cofactor metabolism; pyridoxal 5'-phosphate salvage; pyridoxal 5'-phosphate from pyridoxamine 5'-phosphate: step 1/1. It functions in the pathway cofactor metabolism; pyridoxal 5'-phosphate salvage; pyridoxal 5'-phosphate from pyridoxine 5'-phosphate: step 1/1. Catalyzes the oxidation of either pyridoxine 5'-phosphate (PNP) or pyridoxamine 5'-phosphate (PMP) into pyridoxal 5'-phosphate (PLP). This is Pyridoxine/pyridoxamine 5'-phosphate oxidase from Citrobacter koseri (strain ATCC BAA-895 / CDC 4225-83 / SGSC4696).